A 417-amino-acid chain; its full sequence is Maltodextrin-binding protein MdxE (417 aa).

A signal peptide spans 1–22 (MVLLKKGFAILAASFLAIGLAA). The N-palmitoyl cysteine moiety is linked to residue Cys-23. Cys-23 carries the S-diacylglycerol cysteine lipid modification.

The protein belongs to the bacterial solute-binding protein 1 family. As to quaternary structure, the complex is composed of two ATP-binding proteins (MsmX), two transmembrane proteins (MdxF and MdxG) and a solute-binding protein (MdxE).

It is found in the cell membrane. With respect to regulation, inhibited by glucose and lactose. Functionally, part of the ABC transporter complex involved in maltodextrin import. Binds maltodextrin. Can also bind maltose with low affinity, but is not involved in its uptake. This chain is Maltodextrin-binding protein MdxE (mdxE), found in Bacillus subtilis (strain 168).